The following is a 442-amino-acid chain: Putative helicase 161L (442 aa).

The Helicase ATP-binding domain occupies 88–241; the sequence is IDILEKNHSV…LFPIFFGKEK (154 aa). 101–108 contacts ATP; sequence CFTGFGKT. Residues 194–197 carry the DEAH box motif; the sequence is DEVH.

This sequence belongs to the DEAD box helicase family. DEAH subfamily.

In Invertebrate iridescent virus 6 (IIV-6), this protein is Putative helicase 161L.